Consider the following 269-residue polypeptide: Cbp/p300-interacting transactivator 2 (269 aa).

Residues alanine 142–methionine 200 form a disordered region. Residues serine 165–serine 198 show a composition bias toward gly residues.

It belongs to the CITED family. In terms of assembly, interacts (via C-terminus) with EP300 (via CH1 domain); the interaction is stimulated in response to hypoxia. Interacts with PPARA. Interacts (via C-terminus) with TFAP2A, TFAP2B and TFAP2C. Interacts (via C-terminus) with SMAD2. Interacts (via C-terminus) with SMAD3 (via MH2 domain). Interacts with LHX2 (via LIM domains). Interacts with WT1 isoform 1 and isoform 3. In terms of tissue distribution, ubiquitous.

It is found in the nucleus. Its function is as follows. Transcriptional coactivator of the p300/CBP-mediated transcription complex. Acts as a bridge, linking TFAP2 transcription factors and the p300/CBP transcriptional coactivator complex in order to stimulate TFAP2-mediated transcriptional activation. Positively regulates TGF-beta signaling through its association with the SMAD/p300/CBP-mediated transcriptional coactivator complex. Stimulates the peroxisome proliferator-activated receptors PPARA transcriptional activity. Enhances estrogen-dependent transactivation mediated by estrogen receptors. Also acts as a transcriptional corepressor; interferes with the binding of the transcription factors HIF1A or STAT2 and the p300/CBP transcriptional coactivator complex. Participates in sex determination and early gonad development by stimulating transcription activation of SRY. Plays a role in controlling left-right patterning during embryogenesis; potentiates transcriptional activation of NODAL-mediated gene transcription in the left lateral plate mesoderm (LPM). Plays an essential role in differentiation of the adrenal cortex from the adrenogonadal primordium (AGP); stimulates WT1-mediated transcription activation thereby up-regulating the nuclear hormone receptor NR5A1 promoter activity. Associates with chromatin to the PITX2 P1 promoter region. This chain is Cbp/p300-interacting transactivator 2 (Cited2), found in Mus musculus (Mouse).